We begin with the raw amino-acid sequence, 211 residues long: NADH-quinone oxidoreductase subunit I 1 (211 aa).

2 consecutive 4Fe-4S ferredoxin-type domains span residues 50-80 (LNRHPDGLEKCVGCELCAWACPADAIYVEGA) and 96-125 (RVYQINYARCILCGLCIEACPTRALTMTNE). [4Fe-4S] cluster-binding residues include cysteine 60, cysteine 63, cysteine 66, cysteine 70, cysteine 105, cysteine 108, cysteine 111, and cysteine 115. A disordered region spans residues 192–211 (QEGDSTFGATEPASEEVIRR).

It belongs to the complex I 23 kDa subunit family. As to quaternary structure, NDH-1 is composed of 14 different subunits. Subunits NuoA, H, J, K, L, M, N constitute the membrane sector of the complex. [4Fe-4S] cluster is required as a cofactor.

The protein resides in the cell membrane. It carries out the reaction a quinone + NADH + 5 H(+)(in) = a quinol + NAD(+) + 4 H(+)(out). Its function is as follows. NDH-1 shuttles electrons from NADH, via FMN and iron-sulfur (Fe-S) centers, to quinones in the respiratory chain. The immediate electron acceptor for the enzyme in this species is believed to be ubiquinone. Couples the redox reaction to proton translocation (for every two electrons transferred, four hydrogen ions are translocated across the cytoplasmic membrane), and thus conserves the redox energy in a proton gradient. The polypeptide is NADH-quinone oxidoreductase subunit I 1 (Streptomyces coelicolor (strain ATCC BAA-471 / A3(2) / M145)).